We begin with the raw amino-acid sequence, 278 residues long: tRNA (guanine-N(7)-)-methyltransferase (278 aa).

Residues Gly-95, 118–119, 153–154, and Cys-173 contribute to the S-adenosyl-L-methionine site; these read EI and NA. Asp-176 is an active-site residue. 251 to 253 lines the S-adenosyl-L-methionine pocket; that stretch reads TEE.

The protein belongs to the class I-like SAM-binding methyltransferase superfamily. TrmB family. As to quaternary structure, forms a complex with TRM82.

It localises to the nucleus. The enzyme catalyses guanosine(46) in tRNA + S-adenosyl-L-methionine = N(7)-methylguanosine(46) in tRNA + S-adenosyl-L-homocysteine. Its pathway is tRNA modification; N(7)-methylguanine-tRNA biosynthesis. Catalyzes the formation of N(7)-methylguanine at position 46 (m7G46) in tRNA. The chain is tRNA (guanine-N(7)-)-methyltransferase from Kluyveromyces lactis (strain ATCC 8585 / CBS 2359 / DSM 70799 / NBRC 1267 / NRRL Y-1140 / WM37) (Yeast).